We begin with the raw amino-acid sequence, 366 residues long: Histidinol-phosphate aminotransferase 2 (366 aa).

Residues 1–21 (MQVKDQLSLLQPYKPGKSPEQ) are disordered. K222 bears the N6-(pyridoxal phosphate)lysine mark.

This sequence belongs to the class-II pyridoxal-phosphate-dependent aminotransferase family. Histidinol-phosphate aminotransferase subfamily. Homodimer. Pyridoxal 5'-phosphate serves as cofactor.

The catalysed reaction is L-histidinol phosphate + 2-oxoglutarate = 3-(imidazol-4-yl)-2-oxopropyl phosphate + L-glutamate. It functions in the pathway amino-acid biosynthesis; L-histidine biosynthesis; L-histidine from 5-phospho-alpha-D-ribose 1-diphosphate: step 7/9. This is Histidinol-phosphate aminotransferase 2 from Bacillus cereus (strain ZK / E33L).